The sequence spans 128 residues: MRFAIVVTGPAYGTQQASSAFQFAQALIVEGHELSSVFFYRGGVYNANQLTSPASDEFDLVRGWQQLNAQHGVALNICVAAALRRGIVDETEAGRLGLASSNLQPGFTLSGLGALAEASLTCDRVVQF.

Cys-78 serves as the catalytic Cysteine persulfide intermediate.

Belongs to the DsrE/TusD family. In terms of assembly, heterohexamer, formed by a dimer of trimers. The hexameric TusBCD complex contains 2 copies each of TusB, TusC and TusD. The TusBCD complex interacts with TusE.

It localises to the cytoplasm. Its function is as follows. Part of a sulfur-relay system required for 2-thiolation of 5-methylaminomethyl-2-thiouridine (mnm(5)s(2)U) at tRNA wobble positions. Accepts sulfur from TusA and transfers it in turn to TusE. The sequence is that of Sulfurtransferase TusD from Shigella boydii serotype 18 (strain CDC 3083-94 / BS512).